Here is a 258-residue protein sequence, read N- to C-terminus: UDP-2,3-diacylglucosamine hydrolase (258 aa).

Mn(2+) contacts are provided by aspartate 15, histidine 17, aspartate 48, asparagine 88, and histidine 123. Substrate is bound at residue 88 to 89 (NR). 5 residues coordinate substrate: aspartate 131, serine 169, asparagine 173, lysine 176, and histidine 204. Mn(2+) contacts are provided by histidine 204 and histidine 206.

It belongs to the LpxH family. It depends on Mn(2+) as a cofactor.

The protein resides in the cell inner membrane. The catalysed reaction is UDP-2-N,3-O-bis[(3R)-3-hydroxytetradecanoyl]-alpha-D-glucosamine + H2O = 2-N,3-O-bis[(3R)-3-hydroxytetradecanoyl]-alpha-D-glucosaminyl 1-phosphate + UMP + 2 H(+). Its pathway is glycolipid biosynthesis; lipid IV(A) biosynthesis; lipid IV(A) from (3R)-3-hydroxytetradecanoyl-[acyl-carrier-protein] and UDP-N-acetyl-alpha-D-glucosamine: step 4/6. Functionally, hydrolyzes the pyrophosphate bond of UDP-2,3-diacylglucosamine to yield 2,3-diacylglucosamine 1-phosphate (lipid X) and UMP by catalyzing the attack of water at the alpha-P atom. Involved in the biosynthesis of lipid A, a phosphorylated glycolipid that anchors the lipopolysaccharide to the outer membrane of the cell. This Bordetella pertussis (strain Tohama I / ATCC BAA-589 / NCTC 13251) protein is UDP-2,3-diacylglucosamine hydrolase.